Reading from the N-terminus, the 304-residue chain is L-threonate dehydrogenase (304 aa).

NAD(+)-binding positions include 7-35 (YAVAVIGLGSMGFGAAASCINAGLTTYGV) and Thr-102. Lys-178 is an active-site residue. Lys-246 contacts NAD(+).

This sequence belongs to the HIBADH-related family. L-threonate dehydrogenase subfamily.

The enzyme catalyses L-threonate + NAD(+) = 2-dehydro-L-erythronate + NADH + H(+). Catalyzes oxidation of L-threonate to 2-oxo-tetronate. Can use either NAD(+) or NADP(+) as cosubstrate, with a preference for NAD(+). The polypeptide is L-threonate dehydrogenase (Pectobacterium atrosepticum (strain SCRI 1043 / ATCC BAA-672) (Erwinia carotovora subsp. atroseptica)).